The following is a 446-amino-acid chain: Putative ankyrin repeat protein L273 (446 aa).

ANK repeat units lie at residues 71 to 100 (NGEF…KSNM), 124 to 153 (DHNK…RMRP), 206 to 237 (TDIE…KILM), 245 to 277 (VWVS…KMHV), 303 to 332 (ELEY…NSYY), and 365 to 394 (YTDI…QQII).

In Acanthamoeba polyphaga (Amoeba), this protein is Putative ankyrin repeat protein L273.